Here is a 291-residue protein sequence, read N- to C-terminus: Orotidine 5'-phosphate decarboxylase (291 aa).

The Proton donor role is filled by K97.

Belongs to the OMP decarboxylase family. Type 2 subfamily.

The enzyme catalyses orotidine 5'-phosphate + H(+) = UMP + CO2. The protein operates within pyrimidine metabolism; UMP biosynthesis via de novo pathway; UMP from orotate: step 2/2. This chain is Orotidine 5'-phosphate decarboxylase, found in Clostridium kluyveri (strain ATCC 8527 / DSM 555 / NBRC 12016 / NCIMB 10680 / K1).